A 93-amino-acid polypeptide reads, in one-letter code: Small ribosomal subunit protein uS19 (93 aa).

The protein belongs to the universal ribosomal protein uS19 family.

Functionally, protein S19 forms a complex with S13 that binds strongly to the 16S ribosomal RNA. The sequence is that of Small ribosomal subunit protein uS19 from Limosilactobacillus fermentum (strain NBRC 3956 / LMG 18251) (Lactobacillus fermentum).